Here is a 2309-residue protein sequence, read N- to C-terminus: MGTWKTFWLIISLAAGLGFVKSQRIVCREASVGDIVFLVHNSINPQHAHSVRNFLYILANSLQVGRDNIRVGLAQYSDTPTSEFLLSVYHRKGDVLKHIRGLQFKPGGNRMGQALQFILEHHFREGAGSRASQGVPQVAVVVSSGLTEDHIREPAEALRRAGILVYAIGVKDASQAELREISSSPKDNFTFFVPNFPGLPGLAQKLRPELCSTLGKAAQYTERESPACSEASPADIVFLVDSSTSIGLQNFQKVKHFLHSVVSGLDVRSDQVQVGLVQYSDNIYPAFPLKQSSLKSAVLDRIRNLPYSMGGTSTGSALEFIRANSLTEMSGSRAKDGVPQIVVLVTDGESSDEVQDVADQLKRDGVFVFVVGINIQDVQELQKIANEPFEEFLFTTENFSILQALSGTLLQALCSTVERQMKKSTKTYADVVFLIDTSQGTSQASFQWMQNFISRIIGILEVGQDKYQIGLAQYSDQGHTEFLFNTHKTRNEMVAHIHELLVFQGGSRKTGQGLRFLHRTFFQEAAGSRLLQGVPQYVVVITSGKSEDEVGEVAQILRKRGVDIVSVGLQDFDRAELEGIGPVVLVSDLQGEDRIRQLMLDVNMFIQGSPKPPRVMTDVAKDAVEECLVPVPADLVFLVEDFSSARQPNFQRVVHFLTTTVHSLNIHPDTTRVSLVFYSEKPRLEFSLDMYQSAAQVLRHLDRLTFRARRGRAKAGAALDFLRKEVFLPEKGSRPHRGVQQIAVVIIESPSLDNVSTPASYLRRAGVTIYAAGTQPASESKDLEKIVTYPPWKHAIRLESFLQLSVVGNKLKKKLCPEMLSGMPPLMSFIPESTRQSTQEGCESVEKADIYFLIDGSGSIKPNDFIEMKDFMKEVIKMFHIGPDRVRFGVVQYSDKIISQFFLTQYASMAGLSAAIDNIQQVGGGTTTGKALSKMVPVFQNTARIDVARYLIVITDGQSTDPVAEAAQGLRDIGVNIYAIGVRDANTTELEEIASKKMFFIYEFDSLKSIHQEVIRDICSSENCKSQKADIIFLIDGSESIAPKDFEKMKDFMERMVNQSNIGADEIQIGLLQFSSNPQEEFRLNRYSSKVDMCRAILSVQQMSDGTHTGKALNFTLPFFDSSRGGRPRVHQYLIVITDGVSQDNVAPPAKALRDRNIIIFAIGVGNVQRAQLLEITNDQDKVFQEENFESLQSLEKEILSEVCSSQGCNIDLSVGVDTSTSSERAQQELRRLLPELMQQLAFLSNISCEAPGQMEPRFRYVVPGSSDQPVFDSGFEKYSDETIQKFLVHQGSVNNRMDVDFLQSLGETAIHLSLAKVKVLLVFTDGLDEDLERLRRTSEFLRSRGLSGLLLIGLGGAHKLEELQELEFGRGFAYRQPLSSSLPSLPSVLLKQLDTIVERTCCNMYAKCYGDDGIRGEPGSRGEQGERGLDGLPGHPGEEGDHGQRGPRGLPGLRGEEGCPGVRGPKGARGFSGEKGNPGEEGVGGLDGEQGDRGAAGPSGEKGSSGSRGLTGLPGPAGPRGEPGLRGDPGDPGIDNLIQGPKGEKGRRGHQGSPGFHGPLGEAGSVGPRGSLGRHGLPGLKGVLGETGELGSRGEPGHPGPQGPRGRQGPPGFFGQKGDPGTQGNPGLPGPSGSKGPDGPRGLKGEVGPAGERGPRGQQGPRGQPGLFGPDGHGYPGRKGRKGEPGFPGYPGVQGEDGNPGRGGEKGAKGIRGKRGNSGFPGLAGTPGDQGPPGKMGTKGSKGLADRTPCEIVDFVRGNCPCSTGISRCPAFPTEVVFTLDMSNDVAPSDFERMRNILLSLLMKLEMCESNCPTGARVAIVSYNTRTDYLVRLSDHRGKAALLQAVRKIPLERSSGSRNLGATMRFVARHVFKRVRSGLLVRKVAVFFQAGRNYDTASVSTATLELHAADIATAVVTFTEEHNLPEAGLVDGPNEFHLFTWETEGQQDVERLASCTLCYDKCRPALGCQLRAPGPQKLDMDLVFLVDSSQGVSRDIYLGALRLVDSVLKDLEVAAQPGTSWHGARAALLTHTTPGFWPGVDQAPVLEYFHLTSHGHRTEMQRQIREAASGLLQGGPALGHALEWTLENVLLTAVLPRRSRVLYAIVASETSIWDREKLRTLSQEAKCKGIALFVLAVGPGVGAQELAELAKVASAPWEQHLLRLEGVSEAEVAYASRFTEAFLNLLNSGINQYPPPELVKECGGPNRGDTLLHFFTSAKRFSRSQSGTSAAFANDSEALKSQGIFLGERKSRVASVALQEALGSHGKDRADTEDIDQETPAKGRHLGPTHGPCPMGPEEGECLNYVLK.

The signal sequence occupies residues 1–22 (MGTWKTFWLIISLAAGLGFVKS). The interval 21–1410 (KSQRIVCREA…TCCNMYAKCY (1390 aa)) is nonhelical region. 6 consecutive VWFA domains span residues 34 to 206 (DIVF…AQKL), 235 to 413 (DIVF…LQAL), 430 to 653 (DVVF…FQRV), 634 to 811 (DLVF…GNKL), 849 to 1018 (DIYF…IRDI), and 1030 to 1199 (DIIF…EKEI). Asparagine 188 carries an N-linked (GlcNAc...) asparagine glycan. Asparagine 754 is a glycosylation site (N-linked (GlcNAc...) asparagine). A glycan (N-linked (GlcNAc...) asparagine) is linked at asparagine 1114. The triple-helical region stretch occupies residues 1411–1744 (GDDGIRGEPG…GKMGTKGSKG (334 aa)). Positions 1414–1430 (GIRGEPGSRGEQGERGL) are enriched in basic and acidic residues. The disordered stretch occupies residues 1414-1746 (GIRGEPGSRG…MGTKGSKGLA (333 aa)). Gly residues predominate over residues 1480–1489 (GEEGVGGLDG). The Cell attachment site signature appears at 1527 to 1529 (RGD). Composition is skewed to low complexity over residues 1605–1621 (PRGRQGPPGFFGQKGDP) and 1650–1669 (PAGERGPRGQQGPRGQPGLF). A nonhelical region region spans residues 1745–2309 (LADRTPCEIV…EGECLNYVLK (565 aa)). VWFA domains lie at 1776–1957 (EVVF…ASCT) and 1982–2187 (DLVF…LNLL). The short motif at 2208–2210 (RGD) is the Cell attachment site element. The tract at residues 2262-2300 (ALGSHGKDRADTEDIDQETPAKGRHLGPTHGPCPMGPEE) is disordered.

Belongs to the type VI collagen family. In terms of assembly, trimers composed of three different chains: alpha-1(VI), alpha-2(VI), and alpha-3(VI) or alpha-4(VI) or alpha-5(VI) or alpha-6(VI). Post-translationally, prolines at the third position of the tripeptide repeating unit (G-X-Y) are hydroxylated in some or all of the chains. As to expression, in newborn, it is expressed in lung, kidney, brain, intestine, skin, sternum and, at weak level, calvaria. In adult, it is almost absent with some weak expression in ovary and very weak expression in spleen, lung, uterus and brain.

Its subcellular location is the secreted. The protein localises to the extracellular space. It is found in the extracellular matrix. In terms of biological role, collagen VI acts as a cell-binding protein. This chain is Collagen alpha-4(VI) chain (Col6a4), found in Mus musculus (Mouse).